The primary structure comprises 467 residues: Zinc finger protein ZIC 3 (467 aa).

Residues 66 to 107 (LSSGQSSAFTPQGSGYANALGHHHHHHHHHHHTSQVPSYGGA) form a disordered region. The segment covering 67 to 80 (SSGQSSAFTPQGSG) has biased composition (polar residues). The span at 86–98 (GHHHHHHHHHHHT) shows a compositional bias: basic residues. A Glycyl lysine isopeptide (Lys-Gly) (interchain with G-Cter in SUMO2) cross-link involves residue K248. The C2H2-type 1; atypical zinc finger occupies 251-286 (LSCKWIDEAQLSRPKKSCDRTFSTMHELVTHVTMEH). Residues 295–322 (HVCYWEECPREGKSFKAKYKLVNHIRVH) form a C2H2-type 2; atypical zinc finger. 2 consecutive short sequence motifs (nuclear localization signal) follow at residues 297–322 (CYWEECPREGKSFKAKYKLVNHIRVH) and 330–352 (CPFPGCGKIFARSENLKIHKRTH). 3 C2H2-type zinc fingers span residues 328–352 (FPCPFPGCGKIFARSENLKIHKRTH), 358–382 (FKCEFEGCDRRFANSSDRKKHMHVH), and 388–410 (YICKVCDKSYTHPSSLRKHMKVH). Positions 404-467 (RKHMKVHESQ…LPPNFNEWYV (64 aa)) are disordered. Residues 412 to 428 (SQGSDSSPAASSGYESS) show a composition bias toward low complexity. Residues 435–455 (SANSKDTTKTPSAVQTSTSHN) are compositionally biased toward polar residues.

Belongs to the GLI C2H2-type zinc-finger protein family. In terms of assembly, interacts (via the C2H2-type domains 3, 4 and 5) with MDFIC (via the C2H2-type domains 3, 4 and 5); the interaction reduces its transcriptional activity. Interacts with KPNA1 and KPNA6. Interacts (via C2H2-type domains 3, 4 and 5) with GLI3; the interaction enhances its transcriptional activity.

The protein localises to the nucleus. It localises to the cytoplasm. Its function is as follows. Acts as a transcriptional activator. Required in the earliest stages in both axial midline development and left-right (LR) asymmetry specification. Binds to the minimal GLI-consensus sequence 5'-GGGTGGTC-3'. This Homo sapiens (Human) protein is Zinc finger protein ZIC 3 (ZIC3).